Here is an 87-residue protein sequence, read N- to C-terminus: Small ribosomal subunit protein uS15 (87 aa).

Belongs to the universal ribosomal protein uS15 family. In terms of assembly, part of the 30S ribosomal subunit. Forms a bridge to the 50S subunit in the 70S ribosome, contacting the 23S rRNA.

One of the primary rRNA binding proteins, it binds directly to 16S rRNA where it helps nucleate assembly of the platform of the 30S subunit by binding and bridging several RNA helices of the 16S rRNA. In terms of biological role, forms an intersubunit bridge (bridge B4) with the 23S rRNA of the 50S subunit in the ribosome. In Clostridium botulinum (strain Eklund 17B / Type B), this protein is Small ribosomal subunit protein uS15.